A 445-amino-acid chain; its full sequence is AVMGRNLALNIESRGYTVSVFNRSREKTEEVIAENPGKKLVPHYTVKEFVESLETPRRILLMVKAGAGTDSAIDSLKPYLNKGDIIIDGGNTFFQDTIRRNRELSAEGFNFIGTGVSGGEEGALKGPSIMPGGQKEAYELVAPILEQIAARAEDGEPCVAYIGADGAGHYVKMVHNGIEYGDMQLIAEAYALLKGGLALSNEELATTFTKWNEGELSSYLIDITKDIFTKKDEEGKYLVDVILDEAANKGTGKWTSQSSLDLGEPLSLITESVFARYISSLKDQRVAASKVLTGPKAQPAGDKAEFVEKVRRALYLGKIVSYAQGFSQLRAASNEYNWDLNYGEIAKIFRAGCIIRAQFLQKITDAYEQNAGIANLLLAPYFKQIADEYQQALRDVVAYAVQNGIPVPTFSAAIAYYDSYRSAVLPANLIQAQRDYFGAHTYKRT.

NADP(+) is bound by residues 1-4 (AVMG), 22-24 (NRS), 63-65 (VKA), and N91. Substrate-binding positions include N91 and 117-119 (SGG). The active-site Proton acceptor is K172. 175–176 (HN) lines the substrate pocket. Catalysis depends on E179, which acts as the Proton donor. Substrate-binding residues include Y180, K249, R276, R434, and H440.

It belongs to the 6-phosphogluconate dehydrogenase family. As to quaternary structure, homodimer.

The catalysed reaction is 6-phospho-D-gluconate + NADP(+) = D-ribulose 5-phosphate + CO2 + NADPH. The protein operates within carbohydrate degradation; pentose phosphate pathway; D-ribulose 5-phosphate from D-glucose 6-phosphate (oxidative stage): step 3/3. Functionally, catalyzes the oxidative decarboxylation of 6-phosphogluconate to ribulose 5-phosphate and CO(2), with concomitant reduction of NADP to NADPH. The polypeptide is 6-phosphogluconate dehydrogenase, decarboxylating (gnd) (Raoultella planticola (Klebsiella planticola)).